Here is a 334-residue protein sequence, read N- to C-terminus: Cytoskeleton protein RodZ (334 aa).

The Cytoplasmic portion of the chain corresponds to 1–111; the sequence is MNTEATHDQN…LGKRRKKRDG (111 aa). Residues 19–71 form the HTH cro/C1-type domain; sequence LRNAREQLGLSQQAVAERLCLKVSTVRDIEEDKAPSDLASTFLRGYIRSYARL. A DNA-binding region (H-T-H motif) is located at residues 30–49; the sequence is QQAVAERLCLKVSTVRDIEE. The helical; Signal-anchor for type II membrane protein transmembrane segment at 112-132 threads the bilayer; the sequence is WLMSFTWLVLFVVVGLTGAWW. At 133-334 the chain is on the periplasmic side; sequence WQNHKAQQEE…TLNAEPTPAQ (202 aa). Disordered regions lie at residues 155–207 and 221–241; these read NADK…ATQN and ATSAAPAATETPSALPTSQAG. Over residues 176–207 the composition is skewed to low complexity; the sequence is TTPAQTAPAPATPVDSTAATQTPAATATATQN.

The protein belongs to the RodZ family.

It is found in the cell inner membrane. Cytoskeletal protein that is involved in cell-shape control through regulation of the length of the long axis. This chain is Cytoskeleton protein RodZ, found in Salmonella schwarzengrund (strain CVM19633).